A 309-amino-acid polypeptide reads, in one-letter code: Ornithine carbamoyltransferase (309 aa).

Carbamoyl phosphate contacts are provided by residues 56–59 (STRT), Gln83, Arg107, and 134–137 (HPCQ). L-ornithine is bound by residues Asn165, Asp223, and 227 to 228 (SM). Residues 263 to 264 (CL) and Arg291 contribute to the carbamoyl phosphate site.

The protein belongs to the aspartate/ornithine carbamoyltransferase superfamily. OTCase family.

The protein localises to the cytoplasm. It catalyses the reaction carbamoyl phosphate + L-ornithine = L-citrulline + phosphate + H(+). Its pathway is amino-acid biosynthesis; L-arginine biosynthesis; L-arginine from L-ornithine and carbamoyl phosphate: step 1/3. In terms of biological role, reversibly catalyzes the transfer of the carbamoyl group from carbamoyl phosphate (CP) to the N(epsilon) atom of ornithine (ORN) to produce L-citrulline. The polypeptide is Ornithine carbamoyltransferase (Burkholderia cenocepacia (strain HI2424)).